A 427-amino-acid chain; its full sequence is Enolase (427 aa).

Gln-163 is a (2R)-2-phosphoglycerate binding site. The Proton donor role is filled by Glu-205. Residues Asp-242, Glu-285, and Asp-312 each contribute to the Mg(2+) site. Lys-337, Arg-366, Ser-367, and Lys-388 together coordinate (2R)-2-phosphoglycerate. Lys-337 serves as the catalytic Proton acceptor.

Belongs to the enolase family. Mg(2+) is required as a cofactor.

Its subcellular location is the cytoplasm. It localises to the secreted. The protein localises to the cell surface. The enzyme catalyses (2R)-2-phosphoglycerate = phosphoenolpyruvate + H2O. It functions in the pathway carbohydrate degradation; glycolysis; pyruvate from D-glyceraldehyde 3-phosphate: step 4/5. In terms of biological role, catalyzes the reversible conversion of 2-phosphoglycerate (2-PG) into phosphoenolpyruvate (PEP). It is essential for the degradation of carbohydrates via glycolysis. This Polaromonas sp. (strain JS666 / ATCC BAA-500) protein is Enolase.